A 76-amino-acid chain; its full sequence is Omega-conotoxin-like TxO5 (76 aa).

Residues 1–22 (MKLTCMVIVAVLFLTAWTFVTA) form the signal peptide. The propeptide occupies 23-50 (ITSNGLENLFPNAHHEMKNPEASKLNKR). Cystine bridges form between Cys-51/Cys-66, Cys-58/Cys-70, and Cys-65/Cys-75.

This sequence belongs to the conotoxin O1 superfamily. In terms of tissue distribution, expressed by the venom duct.

The protein localises to the secreted. Functionally, omega-conotoxins act at presynaptic membranes, they bind and block voltage-gated calcium channels (Cav). The chain is Omega-conotoxin-like TxO5 (TXO5) from Conus textile (Cloth-of-gold cone).